A 173-amino-acid polypeptide reads, in one-letter code: Glutamyl-tRNA(Gln) amidotransferase subunit C-1, mitochondrial (173 aa).

A mitochondrion-targeting transit peptide spans 1–23 (MIRIPFRLRPPPGRTLHSLVRTF). Residues 51–70 (PSKVPQRPHKSTTTVGQSTP) are disordered. A compositionally biased stretch (polar residues) spans 61 to 70 (STTTVGQSTP).

It belongs to the GatC family. Subunit of the heterotrimeric GatCAB amidotransferase (AdT) complex, composed of A, B and C subunits.

The protein resides in the mitochondrion. It carries out the reaction L-glutamyl-tRNA(Gln) + L-glutamine + ATP + H2O = L-glutaminyl-tRNA(Gln) + L-glutamate + ADP + phosphate + H(+). Its function is as follows. Allows the formation of correctly charged Gln-tRNA(Gln) through the transamidation of misacylated Glu-tRNA(Gln) in the mitochondria. The reaction takes place in the presence of glutamine and ATP through an activated gamma-phospho-Glu-tRNA(Gln). In Culex quinquefasciatus (Southern house mosquito), this protein is Glutamyl-tRNA(Gln) amidotransferase subunit C-1, mitochondrial.